We begin with the raw amino-acid sequence, 559 residues long: Chromatin assembly factor 1 subunit B (559 aa).

WD repeat units follow at residues 11 to 54 (HNKE…DGKA), 64 to 103 (RHTKAVNVVRFSPTGEILASGGDDAVILLWKVNDNKEPEQ), 127 to 166 (GHLEDVYDICWATDGNLMASASVDNTAIIWDVSKGQKISI), 169 to 208 (EHKSYVQGVTWDPLGQYVATLSCDRVLRVYSIQKKRVAFN), 228 to 279 (FHDD…RPIA), 299 to 340 (ELRP…PFGY), and 344 to 385 (IHYH…IPLK). The disordered stretch occupies residues 386-559 (EKPVLNMRTP…NKGGTESLDP (174 aa)). Thr-394 is subject to Phosphothreonine. Phosphoserine is present on Ser-409. Thr-419 is subject to Phosphothreonine. Position 429 is a phosphoserine (Ser-429). A compositionally biased stretch (low complexity) spans 430–444 (PGTTPPQARQAPAPT). Thr-433 is modified (phosphothreonine). Ser-458 bears the Phosphoserine mark. Residues 469–495 (LQPSSQNTKAHPSRRVTLNTLQAWSKT) are compositionally biased toward polar residues. N6-acetyllysine is present on Lys-494. A phosphothreonine mark is found at Thr-495, Thr-509, Thr-521, and Thr-531. Residues 509–526 (TPPSSVPTSVISTPSTEE) show a composition bias toward low complexity. Phosphoserine is present on Ser-538. Residues 541 to 552 (ELKRPRLDENKG) are compositionally biased toward basic and acidic residues.

This sequence belongs to the WD repeat HIR1 family. Subunit of the CAF-1 complex that contains RBBP4, CHAF1B and CHAF1A. CHAF1A binds directly to CHAF1B. Only minor amounts of RBBP4 are complexed with CHAF1A and CHAF1B in G1 phase. In G2 and S phase also monomeric CHAF1B is detected. Interacts with histones H3.1, H3.2 and H3.1t. Differentially phosphorylated during cell cycle. During mitosis the p60 subunit of inactive CAF-1 is hyperphosphorylated and displaced into the cytosol. Progressivly dephosphorylated from G1 to S and G2 phase. Phosphorylated p60 is recruited to chromatin undergoing DNA repair after UV irradiation in G1, S or G2 phases.

The protein localises to the nucleus. It is found in the cytoplasm. Functionally, acts as a component of the histone chaperone complex chromatin assembly factor 1 (CAF-1), which assembles histone octamers onto DNA during replication and repair. CAF-1 performs the first step of the nucleosome assembly process, bringing newly synthesized histones H3 and H4 to replicating DNA; histones H2A/H2B can bind to this chromatin precursor subsequent to DNA replication to complete the histone octamer. The protein is Chromatin assembly factor 1 subunit B of Homo sapiens (Human).